The sequence spans 269 residues: Thiazole synthase (269 aa).

K109 acts as the Schiff-base intermediate with DXP in catalysis. 1-deoxy-D-xylulose 5-phosphate-binding positions include G170, 196–197 (AG), and 218–219 (NT).

This sequence belongs to the ThiG family. As to quaternary structure, homotetramer. Forms heterodimers with either ThiH or ThiS.

The protein resides in the plastid. Its subcellular location is the chloroplast. The enzyme catalyses [ThiS sulfur-carrier protein]-C-terminal-Gly-aminoethanethioate + 2-iminoacetate + 1-deoxy-D-xylulose 5-phosphate = [ThiS sulfur-carrier protein]-C-terminal Gly-Gly + 2-[(2R,5Z)-2-carboxy-4-methylthiazol-5(2H)-ylidene]ethyl phosphate + 2 H2O + H(+). It functions in the pathway cofactor biosynthesis; thiamine diphosphate biosynthesis. Functionally, catalyzes the rearrangement of 1-deoxy-D-xylulose 5-phosphate (DXP) to produce the thiazole phosphate moiety of thiamine. Sulfur is provided by the thiocarboxylate moiety of the carrier protein ThiS. In vitro, sulfur can be provided by H(2)S. The sequence is that of Thiazole synthase from Thalassiosira pseudonana (Marine diatom).